Reading from the N-terminus, the 434-residue chain is D-amino acid dehydrogenase (434 aa).

3 to 17 (VLVLGSGVIGTASAY) lines the FAD pocket.

The protein belongs to the DadA oxidoreductase family. FAD is required as a cofactor.

It carries out the reaction a D-alpha-amino acid + A + H2O = a 2-oxocarboxylate + AH2 + NH4(+). It functions in the pathway amino-acid degradation; D-alanine degradation; NH(3) and pyruvate from D-alanine: step 1/1. In terms of biological role, oxidative deamination of D-amino acids. In Pseudomonas putida (strain GB-1), this protein is D-amino acid dehydrogenase.